A 2253-amino-acid polypeptide reads, in one-letter code: Protein Ycf2 (2253 aa).

An ATP-binding site is contributed by 1600–1607 (GFIGTGRS).

It belongs to the Ycf2 family.

It localises to the plastid. Its subcellular location is the chloroplast stroma. Functionally, probable ATPase of unknown function. Its presence in a non-photosynthetic plant (Epifagus virginiana) and experiments in tobacco indicate that it has an essential function which is probably not related to photosynthesis. The sequence is that of Protein Ycf2 from Nymphaea alba (White water-lily).